A 369-amino-acid chain; its full sequence is MEGSLEREAPAGALAAVLKHSSTLPPESTQVRGYDFNRGVNYRALLEAFGTTGFQATNFGRAVQQVNAMIEKKLEPLSQDEDQHADLTQSRRPLTSCTIFLGYTSNLISSGIRETIRYLVQHNMVDVLVTTAGGVEEDLIKCLAPTYLGEFSLRGKELRENGINRIGNLLVPNENYCKFEDWLMPILDQMVMEQNTEGVKWTPSKMIARLGKEINNPESVYYWAQKNHIPVFSPALTDGSLGDMIFFHSYKNPGLVLDIVEDLRLINTQAIFAKCTGMIILGGGVVKHHIANANLMRNGADYAVYINTAQEFDGSDSGARPDEAVSWGKIRVDAQPVKVYADASLVFPLLVAETFAQKMDAFMHEKNED.

Position 78 is a phosphoserine (Ser78). NAD(+) is bound by residues Ser105–Ser109, Thr131–Gly133, Glu137, and Asp238. Position 136-137 (Glu136–Glu137) interacts with spermidine. Asp243 provides a ligand contact to spermidine. Gly283 is an NAD(+) binding site. Spermidine is bound at residue His288. Thr308 to Ala309 lines the NAD(+) pocket. Spermidine-binding positions include Gly314–Asp316 and Glu323–Lys329. Lys329 acts as the Nucleophile in catalysis. Asp342–Ala343 contacts NAD(+).

It belongs to the deoxyhypusine synthase family. As to quaternary structure, homotetramer formed by a dimer of dimers. NAD(+) is required as a cofactor.

The enzyme catalyses [eIF5A protein]-L-lysine + spermidine = [eIF5A protein]-deoxyhypusine + propane-1,3-diamine. It participates in protein modification; eIF5A hypusination. In terms of biological role, catalyzes the NAD-dependent oxidative cleavage of spermidine and the subsequent transfer of the butylamine moiety of spermidine to the epsilon-amino group of a critical lysine residue of the eIF-5A precursor protein to form the intermediate deoxyhypusine residue. This is the first step of the post-translational modification of that lysine into an unusual amino acid residue named hypusine. Hypusination is unique to mature eIF-5A factor and is essential for its function. The polypeptide is Deoxyhypusine synthase (DHPS) (Homo sapiens (Human)).